The primary structure comprises 868 residues: LPS-assembly protein LptD (868 aa).

The signal sequence occupies residues 1-24; sequence MLKGIHKYLLMCFGTVLFTVQANA.

The protein belongs to the LptD family. In terms of assembly, component of the lipopolysaccharide transport and assembly complex. Interacts with LptE and LptA.

The protein localises to the cell outer membrane. In terms of biological role, together with LptE, is involved in the assembly of lipopolysaccharide (LPS) at the surface of the outer membrane. The protein is LPS-assembly protein LptD of Francisella tularensis subsp. holarctica (strain LVS).